Reading from the N-terminus, the 286-residue chain is UPF0173 metal-dependent hydrolase RALTA_A1748 (286 aa).

The protein belongs to the UPF0173 family.

The sequence is that of UPF0173 metal-dependent hydrolase RALTA_A1748 from Cupriavidus taiwanensis (strain DSM 17343 / BCRC 17206 / CCUG 44338 / CIP 107171 / LMG 19424 / R1) (Ralstonia taiwanensis (strain LMG 19424)).